The following is a 299-amino-acid chain: Probable GTP 3',8-cyclase (299 aa).

One can recognise a Radical SAM core domain in the interval 4 to 229 (LHNREIKSLR…MQNRKKYLVD (226 aa)). Arginine 13 contacts GTP. Residues cysteine 20 and cysteine 24 each coordinate [4Fe-4S] cluster. Tyrosine 26 lines the S-adenosyl-L-methionine pocket. Cysteine 27 lines the [4Fe-4S] cluster pocket. GTP is bound at residue lysine 61. Residue glycine 65 participates in S-adenosyl-L-methionine binding. Threonine 94 lines the GTP pocket. S-adenosyl-L-methionine is bound at residue serine 118. Lysine 154 contributes to the GTP binding site. Residues cysteine 245 and cysteine 248 each contribute to the [4Fe-4S] cluster site. A GTP-binding site is contributed by 250-252 (RIR). Residue cysteine 262 coordinates [4Fe-4S] cluster.

This sequence belongs to the radical SAM superfamily. MoaA family. [4Fe-4S] cluster serves as cofactor.

It catalyses the reaction GTP + AH2 + S-adenosyl-L-methionine = (8S)-3',8-cyclo-7,8-dihydroguanosine 5'-triphosphate + 5'-deoxyadenosine + L-methionine + A + H(+). Its pathway is cofactor biosynthesis; molybdopterin biosynthesis. Functionally, catalyzes the cyclization of GTP to (8S)-3',8-cyclo-7,8-dihydroguanosine 5'-triphosphate. This chain is Probable GTP 3',8-cyclase, found in Methanococcus aeolicus (strain ATCC BAA-1280 / DSM 17508 / OCM 812 / Nankai-3).